Here is a 440-residue protein sequence, read N- to C-terminus: MSSSTHHWIARRGTALQGSLAIPGDKSVSHRAVMFAALADGVSQIDGFLEGEDTRSTAAIFAKLGVRIETPSASQRIVHGVGVDGLQPPTEVLDCGNAGTGMRLLAGLLAAQRFDSVLVGDASLSKRPMRRVTGPLAQMGARIETQDDGTPPLHVRGGQALHGIDFVSPVASAQVKSAVLLAGLYAQGETSVTEPHPTRDYTERMLSAFGVEIDFSPGKARLRGGQRLRATDIAVPADFSSAAFFIVAASVVPGSEVVLRAVGLNPRRTGLLAALRLMGADIGEENHAEHGGEPVADLHVRYAPLRGAQIPEALVPDMIDEFPALFVAAAAASGQTVVTGAAELRVKESDRLAAMATGLRTLGIQVDETPDGATIHGGSIGSGVIESHGDHRIAMAFAIAGQLSMGQVQVNDVANVATSFPGFDTLAQDVGFGLETAGHR.

3-phosphoshikimate-binding residues include lysine 26, serine 27, and arginine 31. Lysine 26 contributes to the phosphoenolpyruvate binding site. Glycine 99 and arginine 127 together coordinate phosphoenolpyruvate. 3-phosphoshikimate contacts are provided by serine 172, glutamine 174, aspartate 320, and lysine 347. Glutamine 174 contributes to the phosphoenolpyruvate binding site. The active-site Proton acceptor is the aspartate 320. Positions 351 and 392 each coordinate phosphoenolpyruvate.

This sequence belongs to the EPSP synthase family. As to quaternary structure, monomer.

It localises to the cytoplasm. It catalyses the reaction 3-phosphoshikimate + phosphoenolpyruvate = 5-O-(1-carboxyvinyl)-3-phosphoshikimate + phosphate. It participates in metabolic intermediate biosynthesis; chorismate biosynthesis; chorismate from D-erythrose 4-phosphate and phosphoenolpyruvate: step 6/7. Catalyzes the transfer of the enolpyruvyl moiety of phosphoenolpyruvate (PEP) to the 5-hydroxyl of shikimate-3-phosphate (S3P) to produce enolpyruvyl shikimate-3-phosphate and inorganic phosphate. In Xanthomonas axonopodis pv. citri (strain 306), this protein is 3-phosphoshikimate 1-carboxyvinyltransferase.